A 100-amino-acid polypeptide reads, in one-letter code: Urease subunit gamma (100 aa).

It belongs to the urease gamma subunit family. As to quaternary structure, heterotrimer of UreA (gamma), UreB (beta) and UreC (alpha) subunits. Three heterotrimers associate to form the active enzyme.

The protein resides in the cytoplasm. The catalysed reaction is urea + 2 H2O + H(+) = hydrogencarbonate + 2 NH4(+). The protein operates within nitrogen metabolism; urea degradation; CO(2) and NH(3) from urea (urease route): step 1/1. In terms of biological role, expression of the urease operon increases the likelihood of bacterial survival by contributing to acid resistance in vitro and in vivo in BALB/c mice. Y.enterocolitica enters the body via an oral path and must survive the acidic stomach before being able to colonize the intestinal mucosa. The protein is Urease subunit gamma of Yersinia enterocolitica.